Reading from the N-terminus, the 90-residue chain is Probable Fe(2+)-trafficking protein (90 aa).

The protein belongs to the Fe(2+)-trafficking protein family.

In terms of biological role, could be a mediator in iron transactions between iron acquisition and iron-requiring processes, such as synthesis and/or repair of Fe-S clusters in biosynthetic enzymes. In Vibrio campbellii (strain ATCC BAA-1116), this protein is Probable Fe(2+)-trafficking protein.